We begin with the raw amino-acid sequence, 101 residues long: Gastrin (101 aa).

The N-terminal stretch at 1–21 (MPRLCVYMLVLVLALATFSEA) is a signal peptide. The segment at 23–101 (WKPRSQLQDA…FGRRSAEEDQ (79 aa)) is disordered. Residues 25-37 (PRSQLQDASSGPG) show a composition bias toward polar residues. At tyrosine 87 the chain carries Sulfotyrosine. Phenylalanine 92 is subject to Phenylalanine amide. A compositionally biased stretch (basic and acidic residues) spans 92–101 (FGRRSAEEDQ). Phosphoserine is present on serine 96. Residues 96 to 101 (SAEEDQ) constitute a propeptide that is removed on maturation.

It belongs to the gastrin/cholecystokinin family. Post-translationally, sulfation enhances proteolytic processing, and blocks peptide degradation. Levels of sulfation differ between proteolytically-cleaved gastrins and between tissues. As to expression, abundantly expressed in the stomach and duodenum. Low levels in brain, ovary and pancreas.

It is found in the secreted. In terms of biological role, gastrin stimulates the stomach mucosa to produce and secrete hydrochloric acid and the pancreas to secrete its digestive enzymes. It also stimulates smooth muscle contraction and increases blood circulation and water secretion in the stomach and intestine. This Mus musculus (Mouse) protein is Gastrin (Gast).